Reading from the N-terminus, the 164-residue chain is Phosphopantetheine adenylyltransferase (164 aa).

Serine 9 provides a ligand contact to substrate. Residues 9 to 10 (SF) and histidine 17 each bind ATP. Positions 41, 73, and 87 each coordinate substrate. ATP-binding positions include 88–90 (GLR), glutamate 98, and 123–129 (YSYISSS).

This sequence belongs to the bacterial CoaD family. In terms of assembly, homohexamer. Mg(2+) is required as a cofactor.

The protein localises to the cytoplasm. The enzyme catalyses (R)-4'-phosphopantetheine + ATP + H(+) = 3'-dephospho-CoA + diphosphate. The protein operates within cofactor biosynthesis; coenzyme A biosynthesis; CoA from (R)-pantothenate: step 4/5. Reversibly transfers an adenylyl group from ATP to 4'-phosphopantetheine, yielding dephospho-CoA (dPCoA) and pyrophosphate. The protein is Phosphopantetheine adenylyltransferase of Clostridium perfringens (strain ATCC 13124 / DSM 756 / JCM 1290 / NCIMB 6125 / NCTC 8237 / Type A).